A 243-amino-acid chain; its full sequence is NADH-ubiquinone oxidoreductase chain 6 (243 aa).

Helical transmembrane passes span 16–36 (ISSV…SVIV), 41–61 (IISV…LILL), 69–89 (AYLI…LMLI), 104–124 (IPLT…LLPY), and 201–221 (IWLF…IVII).

It belongs to the complex I subunit 6 family.

The protein localises to the mitochondrion membrane. It carries out the reaction a ubiquinone + NADH + 5 H(+)(in) = a ubiquinol + NAD(+) + 4 H(+)(out). Functionally, core subunit of the mitochondrial membrane respiratory chain NADH dehydrogenase (Complex I) that is believed to belong to the minimal assembly required for catalysis. Complex I functions in the transfer of electrons from NADH to the respiratory chain. The immediate electron acceptor for the enzyme is believed to be ubiquinone. The chain is NADH-ubiquinone oxidoreductase chain 6 (ndh-6) from Neurospora crassa (strain ATCC 24698 / 74-OR23-1A / CBS 708.71 / DSM 1257 / FGSC 987).